A 414-amino-acid polypeptide reads, in one-letter code: Serine hydroxymethyltransferase (414 aa).

(6S)-5,6,7,8-tetrahydrofolate is bound by residues Leu-121 and 125–127 (GHL). Lys-229 is modified (N6-(pyridoxal phosphate)lysine).

This sequence belongs to the SHMT family. As to quaternary structure, homodimer. The cofactor is pyridoxal 5'-phosphate.

It is found in the cytoplasm. The catalysed reaction is (6R)-5,10-methylene-5,6,7,8-tetrahydrofolate + glycine + H2O = (6S)-5,6,7,8-tetrahydrofolate + L-serine. The protein operates within one-carbon metabolism; tetrahydrofolate interconversion. Its pathway is amino-acid biosynthesis; glycine biosynthesis; glycine from L-serine: step 1/1. In terms of biological role, catalyzes the reversible interconversion of serine and glycine with tetrahydrofolate (THF) serving as the one-carbon carrier. This reaction serves as the major source of one-carbon groups required for the biosynthesis of purines, thymidylate, methionine, and other important biomolecules. Also exhibits THF-independent aldolase activity toward beta-hydroxyamino acids, producing glycine and aldehydes, via a retro-aldol mechanism. This is Serine hydroxymethyltransferase from Acidovorax ebreus (strain TPSY) (Diaphorobacter sp. (strain TPSY)).